A 394-amino-acid polypeptide reads, in one-letter code: Ribulose bisphosphate carboxylase large chain (394 aa).

Lys5 is subject to N6,N6,N6-trimethyllysine. Substrate-binding residues include Asn114 and Thr164. Lys166 (proton acceptor) is an active-site residue. Lys168 contributes to the substrate binding site. Mg(2+) is bound by residues Lys192, Asp194, and Glu195. Lys192 carries the post-translational modification N6-carboxylysine. The active-site Proton acceptor is the His285. Substrate is bound by residues Arg286, His318, and Ser370.

It belongs to the RuBisCO large chain family. Type I subfamily. As to quaternary structure, heterohexadecamer of 8 large chains and 8 small chains. Mg(2+) is required as a cofactor.

The protein localises to the plastid. Its subcellular location is the chloroplast. The enzyme catalyses 2 (2R)-3-phosphoglycerate + 2 H(+) = D-ribulose 1,5-bisphosphate + CO2 + H2O. It carries out the reaction D-ribulose 1,5-bisphosphate + O2 = 2-phosphoglycolate + (2R)-3-phosphoglycerate + 2 H(+). Functionally, ruBisCO catalyzes two reactions: the carboxylation of D-ribulose 1,5-bisphosphate, the primary event in carbon dioxide fixation, as well as the oxidative fragmentation of the pentose substrate in the photorespiration process. Both reactions occur simultaneously and in competition at the same active site. The chain is Ribulose bisphosphate carboxylase large chain (rbcL) from Barclaya longifolia (Orchid lily).